The chain runs to 399 residues: DNA primase DnaG (399 aa).

The Toprim domain maps to 182-268 (DAIIVVEGRA…EVEDLTQKEI (87 aa)). E188, D230, and D232 together coordinate Mg(2+).

This sequence belongs to the archaeal DnaG primase family. As to quaternary structure, forms a ternary complex with MCM helicase and DNA. Component of the archaeal exosome complex. The cofactor is Mg(2+).

The enzyme catalyses ssDNA + n NTP = ssDNA/pppN(pN)n-1 hybrid + (n-1) diphosphate.. Its function is as follows. RNA polymerase that catalyzes the synthesis of short RNA molecules used as primers for DNA polymerase during DNA replication. Also part of the exosome, which is a complex involved in RNA degradation. Acts as a poly(A)-binding protein that enhances the interaction between heteromeric, adenine-rich transcripts and the exosome. This chain is DNA primase DnaG, found in Archaeoglobus fulgidus (strain ATCC 49558 / DSM 4304 / JCM 9628 / NBRC 100126 / VC-16).